We begin with the raw amino-acid sequence, 89 residues long: Small ribosomal subunit protein uS15 (89 aa).

This sequence belongs to the universal ribosomal protein uS15 family. In terms of assembly, part of the 30S ribosomal subunit. Forms a bridge to the 50S subunit in the 70S ribosome, contacting the 23S rRNA.

Functionally, one of the primary rRNA binding proteins, it binds directly to 16S rRNA where it helps nucleate assembly of the platform of the 30S subunit by binding and bridging several RNA helices of the 16S rRNA. Its function is as follows. Forms an intersubunit bridge (bridge B4) with the 23S rRNA of the 50S subunit in the ribosome. The chain is Small ribosomal subunit protein uS15 from Hamiltonella defensa subsp. Acyrthosiphon pisum (strain 5AT).